Reading from the N-terminus, the 222-residue chain is Pyridoxine/pyridoxamine 5'-phosphate oxidase (222 aa).

Substrate-binding positions include 11 to 14 (RVEY) and K79. FMN is bound by residues 74–79 (RTVLCK), 89–90 (YT), K96, and Q118. Substrate is bound by residues Y136, R140, and S144. FMN contacts are provided by residues 153–154 (QS) and W199. 205–207 (RVH) lines the substrate pocket. An FMN-binding site is contributed by R209.

Belongs to the pyridoxamine 5'-phosphate oxidase family. In terms of assembly, homodimer. The cofactor is FMN.

It carries out the reaction pyridoxamine 5'-phosphate + O2 + H2O = pyridoxal 5'-phosphate + H2O2 + NH4(+). The catalysed reaction is pyridoxine 5'-phosphate + O2 = pyridoxal 5'-phosphate + H2O2. It functions in the pathway cofactor metabolism; pyridoxal 5'-phosphate salvage; pyridoxal 5'-phosphate from pyridoxamine 5'-phosphate: step 1/1. Its pathway is cofactor metabolism; pyridoxal 5'-phosphate salvage; pyridoxal 5'-phosphate from pyridoxine 5'-phosphate: step 1/1. Functionally, catalyzes the oxidation of either pyridoxine 5'-phosphate (PNP) or pyridoxamine 5'-phosphate (PMP) into pyridoxal 5'-phosphate (PLP). The protein is Pyridoxine/pyridoxamine 5'-phosphate oxidase of Mycolicibacterium vanbaalenii (strain DSM 7251 / JCM 13017 / BCRC 16820 / KCTC 9966 / NRRL B-24157 / PYR-1) (Mycobacterium vanbaalenii).